The following is a 296-amino-acid chain: GTPase Era (296 aa).

Residues 7-174 form the Era-type G domain; that stretch reads RAGFVAIVGR…LDEIAAGLPQ (168 aa). Residues 15 to 22 form a G1 region; that stretch reads GRPNVGKS. 15-22 is a binding site for GTP; it reads GRPNVGKS. The tract at residues 41–45 is G2; that stretch reads QTTRH. The G3 stretch occupies residues 62–65; the sequence is DTPG. Residues 62–66 and 123–126 contribute to the GTP site; these read DTPGF and SKID. The tract at residues 123-126 is G4; that stretch reads SKID. The tract at residues 153–155 is G5; it reads VSA. The region spanning 205 to 281 is the KH type-2 domain; the sequence is VGDELPYGCT…HLEIYIKVRK (77 aa).

Belongs to the TRAFAC class TrmE-Era-EngA-EngB-Septin-like GTPase superfamily. Era GTPase family. As to quaternary structure, monomer.

Its subcellular location is the cytoplasm. It localises to the cell inner membrane. An essential GTPase that binds both GDP and GTP, with rapid nucleotide exchange. Plays a role in 16S rRNA processing and 30S ribosomal subunit biogenesis and possibly also in cell cycle regulation and energy metabolism. The chain is GTPase Era from Bordetella parapertussis (strain 12822 / ATCC BAA-587 / NCTC 13253).